A 185-amino-acid polypeptide reads, in one-letter code: Elongation factor P (185 aa).

This sequence belongs to the elongation factor P family.

It localises to the cytoplasm. It participates in protein biosynthesis; polypeptide chain elongation. Its function is as follows. Involved in peptide bond synthesis. Stimulates efficient translation and peptide-bond synthesis on native or reconstituted 70S ribosomes in vitro. Probably functions indirectly by altering the affinity of the ribosome for aminoacyl-tRNA, thus increasing their reactivity as acceptors for peptidyl transferase. This chain is Elongation factor P, found in Agathobacter rectalis (strain ATCC 33656 / DSM 3377 / JCM 17463 / KCTC 5835 / VPI 0990) (Eubacterium rectale).